A 921-amino-acid polypeptide reads, in one-letter code: Dual serine/threonine and tyrosine protein kinase (921 aa).

One can recognise a Protein kinase domain in the interval 645–899 (PKLGRELGRG…PLLGIVEPSL (255 aa)). ATP contacts are provided by residues 651-659 (LGRGQYGVV) and Lys674. Residue Asp770 is the Proton acceptor of the active site.

It belongs to the protein kinase superfamily. Ser/Thr protein kinase family.

The protein localises to the cytoplasm. It localises to the cell membrane. It is found in the apical cell membrane. The protein resides in the basolateral cell membrane. Its subcellular location is the cell junction. It catalyses the reaction L-seryl-[protein] + ATP = O-phospho-L-seryl-[protein] + ADP + H(+). The catalysed reaction is L-threonyl-[protein] + ATP = O-phospho-L-threonyl-[protein] + ADP + H(+). The enzyme catalyses L-tyrosyl-[protein] + ATP = O-phospho-L-tyrosyl-[protein] + ADP + H(+). Its function is as follows. May act as a positive regulator of ERK phosphorylation downstream of fibroblast growth factor-receptor activation. May induce both caspase-dependent apoptosis and caspase-independent cell death. May play a role in the embryonic development. The sequence is that of Dual serine/threonine and tyrosine protein kinase (dstyk) from Takifugu rubripes (Japanese pufferfish).